Consider the following 558-residue polypeptide: Galactoside 2-alpha-L-fucosyltransferase (558 aa).

At 1–43 (MDQNSYRRRSSPIRTTTGGSKSVNFSELLQMKYLSSGTMKLTR) the chain is on the cytoplasmic side. A helical; Signal-anchor for type II membrane protein transmembrane segment spans residues 44–64 (TFTTCLIVFSVLVAFSMIFHQ). Residues 65–558 (HPSDSNRIMG…EDISWGLKLV (494 aa)) lie on the Lumenal side of the membrane. Residues Asn88 and Asn504 are each glycosylated (N-linked (GlcNAc...) asparagine).

This sequence belongs to the glycosyltransferase 37 family. As to quaternary structure, homodimer. Interacts with MUR3, XLT2, XXT2 and XXT5. Expressed in roots, stems, leaves, flowers, siliques and seedlings.

Its subcellular location is the golgi apparatus. It localises to the golgi stack membrane. It is found in the golgi apparatus membrane. Functionally, involved in cell wall biosynthesis. Is both necessary and sufficient for the addition of the terminal fucosyl residue on xyloglucan side chains, but is not involved in the fucosylation of other cell wall components. Associates with other xyloglucan-synthesizing enzymes to form multiprotein complexes for xyloglucan synthesis in the Golgi. The chain is Galactoside 2-alpha-L-fucosyltransferase (FUT1) from Arabidopsis thaliana (Mouse-ear cress).